Consider the following 82-residue polypeptide: RNA-binding protein Hfq (82 aa).

The region spanning 10–70 is the Sm domain; sequence DIFLNGARKN…LSTITPSKAI (61 aa).

This sequence belongs to the Hfq family. Homohexamer.

RNA chaperone that binds small regulatory RNA (sRNAs) and mRNAs to facilitate mRNA translational regulation in response to envelope stress, environmental stress and changes in metabolite concentrations. Also binds with high specificity to tRNAs. This chain is RNA-binding protein Hfq, found in Clostridium kluyveri (strain NBRC 12016).